The following is a 608-amino-acid chain: AAA ATPase forming ring-shaped complexes (608 aa).

Positions 45 to 79 (AQEYDAVLRRLSAAEATRDNMSRQIRGAGEKNRKL) form a coiled coil. 302 to 307 (GNGKTM) contributes to the ATP binding site.

This sequence belongs to the AAA ATPase family. As to quaternary structure, homohexamer. Assembles into a hexameric ring structure.

This is AAA ATPase forming ring-shaped complexes from Rothia mucilaginosa (strain DY-18) (Stomatococcus mucilaginosus).